The following is a 205-amino-acid chain: Small ribosomal subunit protein uS4 (205 aa).

Residues 1 to 46 (MSKRHSAKYKIDRRMGENLWGRPKSPVNQRSYGPGQHGQRRKQKVS) form a disordered region. The region spanning 94–154 (SRLDAIVYRA…EKSRNMALVL (61 aa)) is the S4 RNA-binding domain.

It belongs to the universal ribosomal protein uS4 family. As to quaternary structure, part of the 30S ribosomal subunit. Contacts protein S5. The interaction surface between S4 and S5 is involved in control of translational fidelity.

Functionally, one of the primary rRNA binding proteins, it binds directly to 16S rRNA where it nucleates assembly of the body of the 30S subunit. In terms of biological role, with S5 and S12 plays an important role in translational accuracy. This Caulobacter sp. (strain K31) protein is Small ribosomal subunit protein uS4.